Here is a 187-residue protein sequence, read N- to C-terminus: UPF0301 protein ECA3925 (187 aa).

It belongs to the UPF0301 (AlgH) family.

The sequence is that of UPF0301 protein ECA3925 from Pectobacterium atrosepticum (strain SCRI 1043 / ATCC BAA-672) (Erwinia carotovora subsp. atroseptica).